Reading from the N-terminus, the 182-residue chain is UPF0397 protein SPH_0594 (182 aa).

A run of 5 helical transmembrane segments spans residues 10–30, 46–66, 73–93, 109–129, and 148–168; these read VVAV…NIPT, LLSI…GHAI, YGLW…VGLF, ILIF…VLAP, and IVAG…LLLA.

This sequence belongs to the UPF0397 family.

Its subcellular location is the cell membrane. The sequence is that of UPF0397 protein SPH_0594 from Streptococcus pneumoniae (strain Hungary19A-6).